Here is a 292-residue protein sequence, read N- to C-terminus: Elongation factor Ts (292 aa).

The tract at residues 80 to 83 (TDFV) is involved in Mg(2+) ion dislocation from EF-Tu.

The protein belongs to the EF-Ts family.

It is found in the cytoplasm. Its function is as follows. Associates with the EF-Tu.GDP complex and induces the exchange of GDP to GTP. It remains bound to the aminoacyl-tRNA.EF-Tu.GTP complex up to the GTP hydrolysis stage on the ribosome. This Ralstonia pickettii (strain 12J) protein is Elongation factor Ts.